A 191-amino-acid polypeptide reads, in one-letter code: Ribonuclease M5 (191 aa).

A Toprim domain is found at 8–91; that stretch reads HEFIVVEGRD…AFINRQDALP (84 aa). Mg(2+)-binding residues include Glu14, Asp60, and Asp62.

Belongs to the ribonuclease M5 family. Mg(2+) is required as a cofactor.

Its subcellular location is the cytoplasm. The catalysed reaction is Endonucleolytic cleavage of RNA, removing 21 and 42 nucleotides, respectively, from the 5'- and 3'-termini of a 5S-rRNA precursor.. In terms of biological role, required for correct processing of both the 5' and 3' ends of 5S rRNA precursor. Cleaves both sides of a double-stranded region yielding mature 5S rRNA in one step. The chain is Ribonuclease M5 from Listeria monocytogenes serovar 1/2a (strain ATCC BAA-679 / EGD-e).